Reading from the N-terminus, the 269-residue chain is Glutamate 5-kinase 2 (269 aa).

Lys16 is an ATP binding site. The substrate site is built by Ser57, Asp144, and Asn156. 218 to 224 is a binding site for ATP; that stretch reads SGGMISK.

Belongs to the glutamate 5-kinase family.

The protein localises to the cytoplasm. The enzyme catalyses L-glutamate + ATP = L-glutamyl 5-phosphate + ADP. It functions in the pathway amino-acid biosynthesis; L-proline biosynthesis; L-glutamate 5-semialdehyde from L-glutamate: step 1/2. Functionally, catalyzes the transfer of a phosphate group to glutamate to form L-glutamate 5-phosphate. The chain is Glutamate 5-kinase 2 from Rhizobium meliloti (strain 1021) (Ensifer meliloti).